A 333-amino-acid polypeptide reads, in one-letter code: Ribosomal RNA small subunit methyltransferase H (333 aa).

S-adenosyl-L-methionine contacts are provided by residues 36 to 38 (GGY), aspartate 54, phenylalanine 81, aspartate 102, and glutamine 109.

The protein belongs to the methyltransferase superfamily. RsmH family.

Its subcellular location is the cytoplasm. It carries out the reaction cytidine(1402) in 16S rRNA + S-adenosyl-L-methionine = N(4)-methylcytidine(1402) in 16S rRNA + S-adenosyl-L-homocysteine + H(+). Its function is as follows. Specifically methylates the N4 position of cytidine in position 1402 (C1402) of 16S rRNA. This chain is Ribosomal RNA small subunit methyltransferase H, found in Afipia carboxidovorans (strain ATCC 49405 / DSM 1227 / KCTC 32145 / OM5) (Oligotropha carboxidovorans).